Consider the following 112-residue polypeptide: Nucleoid-associated protein FTM_1023 (112 aa).

This sequence belongs to the YbaB/EbfC family. Homodimer.

The protein localises to the cytoplasm. Its subcellular location is the nucleoid. Binds to DNA and alters its conformation. May be involved in regulation of gene expression, nucleoid organization and DNA protection. The chain is Nucleoid-associated protein FTM_1023 from Francisella tularensis subsp. mediasiatica (strain FSC147).